The primary structure comprises 597 residues: Aspartate--tRNA(Asp/Asn) ligase (597 aa).

E175 contacts L-aspartate. The aspartate stretch occupies residues 199 to 202 (QQYK). Residues R221 and H454 each contribute to the L-aspartate site. An ATP-binding site is contributed by 221–223 (RDE). E488 contacts ATP. R495 provides a ligand contact to L-aspartate. 540 to 543 (GVDR) provides a ligand contact to ATP.

Belongs to the class-II aminoacyl-tRNA synthetase family. Type 1 subfamily. In terms of assembly, homodimer.

It localises to the cytoplasm. The catalysed reaction is tRNA(Asx) + L-aspartate + ATP = L-aspartyl-tRNA(Asx) + AMP + diphosphate. Aspartyl-tRNA synthetase with relaxed tRNA specificity since it is able to aspartylate not only its cognate tRNA(Asp) but also tRNA(Asn). Reaction proceeds in two steps: L-aspartate is first activated by ATP to form Asp-AMP and then transferred to the acceptor end of tRNA(Asp/Asn). In Bartonella quintana (strain Toulouse) (Rochalimaea quintana), this protein is Aspartate--tRNA(Asp/Asn) ligase.